The primary structure comprises 219 residues: ATP phosphoribosyltransferase (219 aa).

Belongs to the ATP phosphoribosyltransferase family. Short subfamily. In terms of assembly, heteromultimer composed of HisG and HisZ subunits.

It localises to the cytoplasm. It catalyses the reaction 1-(5-phospho-beta-D-ribosyl)-ATP + diphosphate = 5-phospho-alpha-D-ribose 1-diphosphate + ATP. The protein operates within amino-acid biosynthesis; L-histidine biosynthesis; L-histidine from 5-phospho-alpha-D-ribose 1-diphosphate: step 1/9. In terms of biological role, catalyzes the condensation of ATP and 5-phosphoribose 1-diphosphate to form N'-(5'-phosphoribosyl)-ATP (PR-ATP). Has a crucial role in the pathway because the rate of histidine biosynthesis seems to be controlled primarily by regulation of HisG enzymatic activity. The sequence is that of ATP phosphoribosyltransferase from Syntrophotalea carbinolica (strain DSM 2380 / NBRC 103641 / GraBd1) (Pelobacter carbinolicus).